The chain runs to 67 residues: Large ribosomal subunit protein bL31 (67 aa).

It belongs to the bacterial ribosomal protein bL31 family. Type A subfamily. In terms of assembly, part of the 50S ribosomal subunit.

Functionally, binds the 23S rRNA. This chain is Large ribosomal subunit protein bL31, found in Helicobacter acinonychis (strain Sheeba).